Reading from the N-terminus, the 416-residue chain is Acyl-coenzyme A amino acid N-acyltransferase 1 (416 aa).

A Phosphoserine modification is found at Ser-125. Active-site charge relay system residues include Ser-235, Asp-325, and His-359. Ser-414 bears the Phosphoserine mark. The Microbody targeting signal signature appears at 414 to 416; sequence SKL.

This sequence belongs to the C/M/P thioester hydrolase family. Expressed mainly in liver and kidney with low levels in adrenal and little or no expression in other tissues.

It localises to the peroxisome. The catalysed reaction is tetracosanoyl-CoA + taurine = N-tetracosanoyl-taurine + CoA + H(+). The enzyme catalyses eicosanoyl-CoA + taurine = N-eicosanoyl-taurine + CoA + H(+). It catalyses the reaction taurine + octadecanoyl-CoA = N-octadecanoyl-taurine + CoA + H(+). It carries out the reaction taurine + hexadecanoyl-CoA = N-hexadecanoyl-taurine + CoA + H(+). The catalysed reaction is tetradecanoyl-CoA + taurine = N-tetradecanoyl-taurine + CoA + H(+). The enzyme catalyses dodecanoyl-CoA + taurine = N-dodecanoyl-taurine + CoA + H(+). Acyltransferase which efficiently conjugates very long-chain and long-chain fatty acids to taurine. Shows no conjugation activity in the presence of glycine. This Mus musculus (Mouse) protein is Acyl-coenzyme A amino acid N-acyltransferase 1.